A 322-amino-acid polypeptide reads, in one-letter code: uncharacterized protein (322 aa).

Transmembrane regions (helical) follow at residues 159–179, 203–223, 234–254, 267–287, and 296–316; these read GIIF…MLYL, MNIP…YIWL, GGIL…RVGL, FEGS…LIPY, and TLLS…FFAW.

It localises to the membrane. This is an uncharacterized protein from Dictyostelium discoideum (Social amoeba).